Here is a 660-residue protein sequence, read N- to C-terminus: Bifunctional polymyxin resistance protein ArnA (660 aa).

The segment at Met-1–Leu-304 is formyltransferase ArnAFT. His-104 acts as the Proton donor; for formyltransferase activity in catalysis. Residues Arg-114 and Val-136–Asp-140 contribute to the (6R)-10-formyltetrahydrofolate site. The dehydrogenase ArnADH stretch occupies residues Arg-314–Ser-660. NAD(+) contacts are provided by residues Asp-347 and Asp-368–Ile-369. UDP-alpha-D-glucuronate is bound by residues Ala-393, Tyr-398, and Thr-432–Ser-433. Catalysis depends on Glu-434, which acts as the Proton acceptor; for decarboxylase activity. UDP-alpha-D-glucuronate contacts are provided by residues Arg-460, Asn-492, Lys-526 to Arg-535, and Tyr-613. Catalysis depends on Arg-619, which acts as the Proton donor; for decarboxylase activity.

The protein in the N-terminal section; belongs to the Fmt family. UDP-L-Ara4N formyltransferase subfamily. It in the C-terminal section; belongs to the NAD(P)-dependent epimerase/dehydratase family. UDP-glucuronic acid decarboxylase subfamily. In terms of assembly, homohexamer, formed by a dimer of trimers.

The catalysed reaction is UDP-alpha-D-glucuronate + NAD(+) = UDP-beta-L-threo-pentopyranos-4-ulose + CO2 + NADH. The enzyme catalyses UDP-4-amino-4-deoxy-beta-L-arabinose + (6R)-10-formyltetrahydrofolate = UDP-4-deoxy-4-formamido-beta-L-arabinose + (6S)-5,6,7,8-tetrahydrofolate + H(+). The protein operates within nucleotide-sugar biosynthesis; UDP-4-deoxy-4-formamido-beta-L-arabinose biosynthesis; UDP-4-deoxy-4-formamido-beta-L-arabinose from UDP-alpha-D-glucuronate: step 1/3. It participates in nucleotide-sugar biosynthesis; UDP-4-deoxy-4-formamido-beta-L-arabinose biosynthesis; UDP-4-deoxy-4-formamido-beta-L-arabinose from UDP-alpha-D-glucuronate: step 3/3. It functions in the pathway bacterial outer membrane biogenesis; lipopolysaccharide biosynthesis. Its function is as follows. Bifunctional enzyme that catalyzes the oxidative decarboxylation of UDP-glucuronic acid (UDP-GlcUA) to UDP-4-keto-arabinose (UDP-Ara4O) and the addition of a formyl group to UDP-4-amino-4-deoxy-L-arabinose (UDP-L-Ara4N) to form UDP-L-4-formamido-arabinose (UDP-L-Ara4FN). The modified arabinose is attached to lipid A and is required for resistance to polymyxin and cationic antimicrobial peptides. This Salmonella choleraesuis (strain SC-B67) protein is Bifunctional polymyxin resistance protein ArnA.